The chain runs to 201 residues: dITP/XTP pyrophosphatase (201 aa).

A substrate-binding site is contributed by 8–13 (TTNENK). The active-site Proton acceptor is Asp-68. Asp-68 contacts Mg(2+). Substrate contacts are provided by residues Ser-69, 155 to 158 (FGYD), Lys-177, and 182 to 183 (HR).

Belongs to the HAM1 NTPase family. Homodimer. The cofactor is Mg(2+).

The catalysed reaction is XTP + H2O = XMP + diphosphate + H(+). It catalyses the reaction dITP + H2O = dIMP + diphosphate + H(+). It carries out the reaction ITP + H2O = IMP + diphosphate + H(+). Functionally, pyrophosphatase that catalyzes the hydrolysis of nucleoside triphosphates to their monophosphate derivatives, with a high preference for the non-canonical purine nucleotides XTP (xanthosine triphosphate), dITP (deoxyinosine triphosphate) and ITP. Seems to function as a house-cleaning enzyme that removes non-canonical purine nucleotides from the nucleotide pool, thus preventing their incorporation into DNA/RNA and avoiding chromosomal lesions. The polypeptide is dITP/XTP pyrophosphatase (Borreliella burgdorferi (strain ATCC 35210 / DSM 4680 / CIP 102532 / B31) (Borrelia burgdorferi)).